A 59-amino-acid chain; its full sequence is MKNIKITQIKSAIGRLPKHKKTLIGLGLRYIGHTVIREDTPSIQGMVKKISYILKIQEE.

Belongs to the universal ribosomal protein uL30 family. Part of the 50S ribosomal subunit.

This Buchnera aphidicola subsp. Acyrthosiphon pisum (strain 5A) protein is Large ribosomal subunit protein uL30.